Reading from the N-terminus, the 381-residue chain is MLLSIGMLMLSATQVYTILTVQLFAFLNLLPVEADILAYNFENASQTFDDLPARFGYRLPAEGLKGFLINSKPENACEPIVPPPVKDNSSGTFIVLIRRLDCNFDIKVLNAQRAGYKAAIVHNVDSDDLISMGSNDIEVLKKIDIPSVFIGESSANSLKDEFTYEKGGHLILVPEFSLPLEYYLIPFLIIVGICLILIVIFMITKFVQDRHRARRNRLRKDQLKKLPVHKFKKGDEYDVCAICLDEYEDGDKLRILPCSHAYHCKCVDPWLTKTKKTCPVCKQKVVPSQGDSDSDTDSSQEENEVTEHTPLLRPLASVSAQSFGALSESRSHQNMTESSDYEEDDNEDTDSSDAENEINEHDVVVQLQPNGERDYNIANTV.

The signal sequence occupies residues 1 to 34 (MLLSIGMLMLSATQVYTILTVQLFAFLNLLPVEA). Over 35–182 (DILAYNFENA…VPEFSLPLEY (148 aa)) the chain is Lumenal. The 96-residue stretch at 65–160 (KGFLINSKPE…GESSANSLKD (96 aa)) folds into the PA domain. Asn-88 is a glycosylation site (N-linked (GlcNAc...) asparagine). Residues 183–203 (YLIPFLIIVGICLILIVIFMI) form a helical membrane-spanning segment. Over 204–381 (TKFVQDRHRA…ERDYNIANTV (178 aa)) the chain is Cytoplasmic. The RING-type; atypical zinc-finger motif lies at 240 to 282 (CAICLDEYEDGDKLRILPCSHAYHCKCVDPWLTKTKKTCPVCK). The tract at residues 285 to 381 (VVPSQGDSDS…ERDYNIANTV (97 aa)) is disordered. Acidic residues-rich tracts occupy residues 292–304 (SDSDTDSSQEENE) and 339–357 (SDYEEDDNEDTDSSDAENE).

In terms of assembly, interacts with ERN1. In terms of processing, autoubiquitinated. As to expression, widely expressed (at protein level). In normal pancreas, expressed in islets, but not in ducts, nor in acini (at protein level).

It localises to the endoplasmic reticulum membrane. The protein resides in the late endosome membrane. It is found in the lysosome membrane. Its subcellular location is the nucleus inner membrane. It catalyses the reaction S-ubiquitinyl-[E2 ubiquitin-conjugating enzyme]-L-cysteine + [acceptor protein]-L-lysine = [E2 ubiquitin-conjugating enzyme]-L-cysteine + N(6)-ubiquitinyl-[acceptor protein]-L-lysine.. It participates in protein modification; protein ubiquitination. E3 ubiquitin-protein ligase that regulates cell proliferation. Involved in apoptosis regulation. Mediates ER stress-induced activation of JNK signaling pathway and apoptosis by promoting ERN1 activation and splicing of XBP1 mRNA. Also involved in protein trafficking and localization. The chain is E3 ubiquitin-protein ligase RNF13 from Homo sapiens (Human).